We begin with the raw amino-acid sequence, 400 residues long: Argininosuccinate synthase (400 aa).

ATP-binding positions include 10–18 (AYSGGVDTS) and alanine 38. Tyrosine 89 contacts L-citrulline. Glycine 119 provides a ligand contact to ATP. Residues threonine 121, asparagine 125, and aspartate 126 each contribute to the L-aspartate site. Asparagine 125 contributes to the L-citrulline binding site. The L-citrulline site is built by arginine 129, serine 177, serine 186, glutamate 262, and tyrosine 274.

It belongs to the argininosuccinate synthase family. Type 1 subfamily. In terms of assembly, homotetramer.

It localises to the cytoplasm. The catalysed reaction is L-citrulline + L-aspartate + ATP = 2-(N(omega)-L-arginino)succinate + AMP + diphosphate + H(+). It functions in the pathway amino-acid biosynthesis; L-arginine biosynthesis; L-arginine from L-ornithine and carbamoyl phosphate: step 2/3. The chain is Argininosuccinate synthase from Prochlorococcus marinus (strain NATL2A).